A 1144-amino-acid polypeptide reads, in one-letter code: Probable translation initiation factor IF-2 (1144 aa).

One can recognise a DOD-type homing endonuclease domain in the interval 232–362 (FAGVMFGDGS…LSLLLLRFGI (131 aa)). In terms of domain architecture, tr-type G spans 551–768 (TTETHNFVAN…LIAGLSQKYL (218 aa)). GTP contacts are provided by residues 624–628 (DTPGH) and 678–681 (NKID).

It belongs to the TRAFAC class translation factor GTPase superfamily. Classic translation factor GTPase family. IF-2 subfamily. Post-translationally, this protein undergoes a protein self splicing that involves a post-translational excision of the intervening region (intein) followed by peptide ligation.

Its function is as follows. Function in general translation initiation by promoting the binding of the formylmethionine-tRNA to ribosomes. Seems to function along with eIF-2. The sequence is that of Probable translation initiation factor IF-2 (infB) from Thermococcus kodakarensis (strain ATCC BAA-918 / JCM 12380 / KOD1) (Pyrococcus kodakaraensis (strain KOD1)).